The chain runs to 186 residues: Ribosome-recycling factor (186 aa).

Belongs to the RRF family.

The protein localises to the cytoplasm. Its function is as follows. Responsible for the release of ribosomes from messenger RNA at the termination of protein biosynthesis. May increase the efficiency of translation by recycling ribosomes from one round of translation to another. The sequence is that of Ribosome-recycling factor from Azorhizobium caulinodans (strain ATCC 43989 / DSM 5975 / JCM 20966 / LMG 6465 / NBRC 14845 / NCIMB 13405 / ORS 571).